The primary structure comprises 1055 residues: Elongation factor 3 (1055 aa).

V45 lines the ADP pocket. HEAT repeat units follow at residues 48 to 86, 96 to 133, 134 to 172, 176 to 213, 218 to 255, 257 to 290, and 296 to 337; these read FTQI…NGAA, SAEN…SMNP, WASF…SAPF, EAMP…LVEN, KFVP…APTI, LIAP…LVDS, and PFLP…VPAE. ABC transporter domains follow at residues 447–659 and 687–1004; these read CNIE…SYYQ and LKMR…KKAA. Positions 723, 933, 936, and 962 each coordinate ADP. The segment at 1024–1055 is disordered; the sequence is EKKLSAADKRKAKKDRMARRKRGEEVFSDEEL. The span at 1033–1044 shows a compositional bias: basic residues; that stretch reads RKAKKDRMARRK.

This sequence belongs to the ABC transporter superfamily. ABCF family. EF3 subfamily. As to quaternary structure, interacts with CCH1; the interaction is direct and required for the localization of CCH1 to the cell membrane.

It is found in the cytoplasm. The protein localises to the cytosol. The catalysed reaction is ATP + H2O = ADP + phosphate + H(+). It participates in protein biosynthesis; polypeptide chain elongation. Ribosome-dependent ATPase that functions in cytoplasmic translation elongation. Required for the ATP-dependent release of deacylated tRNA from the ribosomal E-site during protein biosynthesis. Stimulates the eEF1A-dependent binding of aminoacyl-tRNA to the ribosomal A-site, which has reduced affinity for tRNA as long as the E-site is occupied. Assists translation termination by stimulating the release of nascent protein from the ribosome by release factors. Appears to localize calcium-channel protein CCH1 to the plasma membrane. The sequence is that of Elongation factor 3 from Cryptococcus neoformans var. grubii serotype A (strain H99 / ATCC 208821 / CBS 10515 / FGSC 9487) (Filobasidiella neoformans var. grubii).